The chain runs to 130 residues: uncharacterized protein (130 aa).

N-linked (GlcNAc...) asparagine glycosylation is present at asparagine 102. A helical membrane pass occupies residues 110-130; the sequence is DPLAFYLMFLIIITILLIMIL.

It is found in the membrane. This is an uncharacterized protein from Dictyostelium discoideum (Social amoeba).